Here is a 65-residue protein sequence, read N- to C-terminus: Large ribosomal subunit protein uL29 (65 aa).

This sequence belongs to the universal ribosomal protein uL29 family.

This chain is Large ribosomal subunit protein uL29, found in Mycoplasmopsis synoviae (strain 53) (Mycoplasma synoviae).